Consider the following 314-residue polypeptide: Mitochondrial RNA-splicing protein MRS3 (314 aa).

Solcar repeat units follow at residues 31 to 118, 128 to 210, and 217 to 310; these read APLY…CKKN, HHPF…STKF, and YNPL…AKHF. 6 helical membrane-spanning segments follow: residues 33–52, 93–112, 130–149, 185–204, 219–238, and 285–298; these read LYHQ…SVMF, GVQS…FGTY, PFKT…ALMN, SYPT…FVIY, PLIH…AITT, and GWKP…PATA.

Belongs to the mitochondrial carrier (TC 2.A.29) family.

The protein resides in the mitochondrion inner membrane. MRS3 suppresses a mitochondrial splice defect in the first intron of the COB gene. It may act as a carrier, exerting its suppressor activity via modulation of solute concentrations in the mitochondrion (possibly of cations). The protein is Mitochondrial RNA-splicing protein MRS3 (MRS3) of Saccharomyces cerevisiae (strain ATCC 204508 / S288c) (Baker's yeast).